The following is a 335-amino-acid chain: Phospho-N-acetylmuramoyl-pentapeptide-transferase (335 aa).

10 helical membrane passes run 3-23, 53-73, 78-98, 118-138, 143-163, 174-194, 200-220, 226-246, 251-271, and 314-334; these read LTILAGLIAFAVTALAMPHFI, GGTVFLLVATSLSFVFALVYF, SLGLISGILLIVLIYGIIGFL, FTLQIVGGLVFYVIHVMPSGI, VFGYHWHLGFLYLCFVLFWVV, GIDGLASVSVVISLLAYGVIA, FDVLLLIGIMVGALLAFFLFN, IFMGDVGSLALGAMLAAISIA, WTLLVIGIVYVLETSSVMLQV, and VDAFLWALGLVASLIVLAILY.

It belongs to the glycosyltransferase 4 family. MraY subfamily. Mg(2+) serves as cofactor.

The protein localises to the cell membrane. It catalyses the reaction UDP-N-acetyl-alpha-D-muramoyl-L-alanyl-gamma-D-glutamyl-L-lysyl-D-alanyl-D-alanine + di-trans,octa-cis-undecaprenyl phosphate = Mur2Ac(oyl-L-Ala-gamma-D-Glu-L-Lys-D-Ala-D-Ala)-di-trans,octa-cis-undecaprenyl diphosphate + UMP. Its pathway is cell wall biogenesis; peptidoglycan biosynthesis. Catalyzes the initial step of the lipid cycle reactions in the biosynthesis of the cell wall peptidoglycan: transfers peptidoglycan precursor phospho-MurNAc-pentapeptide from UDP-MurNAc-pentapeptide onto the lipid carrier undecaprenyl phosphate, yielding undecaprenyl-pyrophosphoryl-MurNAc-pentapeptide, known as lipid I. The protein is Phospho-N-acetylmuramoyl-pentapeptide-transferase of Streptococcus equi subsp. zooepidemicus (strain MGCS10565).